A 517-amino-acid chain; its full sequence is Ribonuclease Y (517 aa).

The helical transmembrane segment at 1–21 threads the bilayer; it reads MIESLIALIAAIVGLGIGYLV. The region spanning 207 to 273 is the KH domain; that stretch reads LINVINIKND…TKVIELLVED (67 aa). The HD domain maps to 333 to 426; sequence ALAHSLEVAH…VCAADTLSAA (94 aa).

This sequence belongs to the RNase Y family.

The protein localises to the cell membrane. Endoribonuclease that initiates mRNA decay. This Campylobacter jejuni subsp. jejuni serotype O:23/36 (strain 81-176) protein is Ribonuclease Y.